The chain runs to 246 residues: Small ribosomal subunit protein uS2 (246 aa).

The protein belongs to the universal ribosomal protein uS2 family. Component of the small ribosomal subunit. Mature ribosomes consist of a small (40S) and a large (60S) subunit. The 40S subunit contains about 33 different proteins and 1 molecule of RNA (18S). The 60S subunit contains about 49 different proteins and 3 molecules of RNA (25S, 5.8S and 5S). Interacts with ribosomal protein S21.

The protein resides in the cytoplasm. Required for the assembly and/or stability of the 40S ribosomal subunit. Required for the processing of the 20S rRNA-precursor to mature 18S rRNA in a late step of the maturation of 40S ribosomal subunits. The protein is Small ribosomal subunit protein uS2 of Leishmania infantum.